We begin with the raw amino-acid sequence, 55 residues long: Variant surface glycoprotein ETAT 1.2 (55 aa).

A glycan (N-linked (GlcNAc...) asparagine) is linked at Asn-34. The GPI-anchor amidated asparagine moiety is linked to residue Asn-38. The propeptide at 39–55 is removed in mature form; sequence NSFAIKTSTLLLAVLLF.

The protein localises to the cell membrane. In terms of biological role, VSG forms a coat on the surface of the parasite. The trypanosome evades the immune response of the host by expressing a series of antigenically distinct VSGs from an estimated 1000 VSG genes. The polypeptide is Variant surface glycoprotein ETAT 1.2 (Trypanosoma brucei rhodesiense).